Reading from the N-terminus, the 84-residue chain is Small ribosomal subunit protein bS16 (84 aa).

Belongs to the bacterial ribosomal protein bS16 family.

The polypeptide is Small ribosomal subunit protein bS16 (Thioalkalivibrio sulfidiphilus (strain HL-EbGR7)).